Here is a 429-residue protein sequence, read N- to C-terminus: Threonine synthase (429 aa).

An N6-(pyridoxal phosphate)lysine modification is found at K107.

It belongs to the threonine synthase family. Pyridoxal 5'-phosphate serves as cofactor.

It catalyses the reaction O-phospho-L-homoserine + H2O = L-threonine + phosphate. It participates in amino-acid biosynthesis; L-threonine biosynthesis; L-threonine from L-aspartate: step 5/5. Functionally, catalyzes the gamma-elimination of phosphate from L-phosphohomoserine and the beta-addition of water to produce L-threonine. The sequence is that of Threonine synthase (thrC) from Serratia marcescens.